The primary structure comprises 436 residues: ATP-dependent RNA helicase RhlB (436 aa).

A Q motif motif is present at residues 9–37; the sequence is QKFADFPLHKEVHQALNEAGFEFCTPIQA. The 180-residue stretch at 40-219 folds into the Helicase ATP-binding domain; it reads LPILLEKKDI…YDHMNEPEKV (180 aa). 53–60 contacts ATP; sequence AQTGTGKT. Positions 165 to 168 match the DEAD box motif; sequence DEAD. The Helicase C-terminal domain occupies 243 to 390; the sequence is KMPLLLSLLE…VTSYDSDALL (148 aa). Residues 392–436 form a disordered region; the sequence is DIPPPVRIHRKPSTHTRNTRDRSSGRPQGGQRNGPRRHDKTRRHS. Positions 425-436 are enriched in basic residues; the sequence is GPRRHDKTRRHS.

This sequence belongs to the DEAD box helicase family. RhlB subfamily. As to quaternary structure, component of the RNA degradosome, which is a multiprotein complex involved in RNA processing and mRNA degradation.

The protein localises to the cytoplasm. It carries out the reaction ATP + H2O = ADP + phosphate + H(+). In terms of biological role, DEAD-box RNA helicase involved in RNA degradation. Has RNA-dependent ATPase activity and unwinds double-stranded RNA. The polypeptide is ATP-dependent RNA helicase RhlB (Shewanella pealeana (strain ATCC 700345 / ANG-SQ1)).